The following is a 936-amino-acid chain: Isoleucine--tRNA ligase (936 aa).

Positions 58 to 68 (PYANGRAHLGT) match the 'HIGH' region motif. Glu-561 is an L-isoleucyl-5'-AMP binding site. The 'KMSKS' region motif lies at 602-606 (KMSKS). An ATP-binding site is contributed by Lys-605. Cys-899, Cys-902, Cys-919, and Cys-922 together coordinate Zn(2+).

It belongs to the class-I aminoacyl-tRNA synthetase family. IleS type 1 subfamily. As to quaternary structure, monomer. Requires Zn(2+) as cofactor.

The protein resides in the cytoplasm. The enzyme catalyses tRNA(Ile) + L-isoleucine + ATP = L-isoleucyl-tRNA(Ile) + AMP + diphosphate. Its function is as follows. Catalyzes the attachment of isoleucine to tRNA(Ile). As IleRS can inadvertently accommodate and process structurally similar amino acids such as valine, to avoid such errors it has two additional distinct tRNA(Ile)-dependent editing activities. One activity is designated as 'pretransfer' editing and involves the hydrolysis of activated Val-AMP. The other activity is designated 'posttransfer' editing and involves deacylation of mischarged Val-tRNA(Ile). The protein is Isoleucine--tRNA ligase of Coxiella burnetii (strain CbuK_Q154) (Coxiella burnetii (strain Q154)).